We begin with the raw amino-acid sequence, 211 residues long: Tudor-interacting repair regulator protein (211 aa).

Glycyl lysine isopeptide (Lys-Gly) (interchain with G-Cter in ubiquitin) cross-links involve residues Lys10 and Lys151. An interaction with PXN region spans residues 118–205 (TLEQLHAVEI…TEKQKKALEK (88 aa)).

The protein belongs to the Nudix hydrolase family. TIRR subfamily. In terms of assembly, homodimer. Interacts with TP53BP1 (via the Tudor-like domain); interaction is abolished following DNA damage and TP53BP1 phosphorylation by ATM. Interacts (via the cytoplasmic part) with SDC4. Interacts with TGFB1I1 and PXN.

The protein localises to the nucleus. Key regulator of TP53BP1 required to stabilize TP53BP1 and regulate its recruitment to chromatin. In absence of DNA damage, interacts with the tandem Tudor-like domain of TP53BP1, masking the region that binds histone H4 dimethylated at 'Lys-20' (H4K20me2), thereby preventing TP53BP1 recruitment to chromatin and maintaining TP53BP1 localization to the nucleus. Following DNA damage, ATM-induced phosphorylation of TP53BP1 and subsequent recruitment of RIF1 leads to dissociate NUDT16L1/TIRR from TP53BP1, unmasking the tandem Tudor-like domain and allowing recruitment of TP53BP1 to DNA double strand breaks (DSBs). Binds U8 snoRNA. The protein is Tudor-interacting repair regulator protein of Homo sapiens (Human).